The primary structure comprises 1196 residues: Homeodomain-interacting protein kinase 2 (1196 aa).

The residue at position 16 (S16) is a Phosphoserine. A Glycyl lysine isopeptide (Lys-Gly) (interchain with G-Cter in SUMO); alternate cross-link involves residue K32. A Glycyl lysine isopeptide (Lys-Gly) (interchain with G-Cter in SUMO2); alternate cross-link involves residue K32. The interval 50-69 (VYSQSKNIPPSQPASTTVST) is disordered. The segment at 97–230 (SASSTSVTGQ…TNEIVAIKIL (134 aa)) is transcriptional corepression. A phosphoserine mark is found at S118 and S135. T141 is modified (phosphothreonine). Residues 189–520 (HEVLCSMTNT…DADKRVTPIE (332 aa)) are interaction with DAXX. In terms of domain architecture, Protein kinase spans 199–527 (YEVLEFLGRG…PIETLNHPFV (329 aa)). ATP-binding positions include 205 to 213 (LGRGTFGQV) and K228. T252 and T273 each carry phosphothreonine. D324 (proton acceptor) is an active-site residue. Phosphotyrosine; by autocatalysis is present on Y361. Position 441 is a phosphoserine (S441). Phosphothreonine is present on residues T482, T517, and T566. The segment at 539–844 (AHVKSCFQNM…KENTPPRCAM (306 aa)) is interaction with SKI and SMAD1. The segment at 600–800 (SATLSLANPE…MRQQPTSTTS (201 aa)) is interaction with DAZAP2. Residues S634 and S668 each carry the phosphoserine modification. A Phosphothreonine modification is found at T687. Positions 752 to 897 (RNTHAHGSHY…ITISSDTDEE (146 aa)) are interaction with POU4F1. Residues 774-876 (HVTLPAAQPL…TRERQRQTIV (103 aa)) are interaction with CTBP1. Residues 787 to 897 (VAHVMRQQPT…ITISSDTDEE (111 aa)) form an interaction with HMGA1 region. 2 disordered regions span residues 792-847 (RQQP…MVHS) and 891-963 (SSDT…CTGN). A compositionally biased stretch (polar residues) spans 793-829 (QQPTSTTSSRKSKQHQSSVRNVSTCEVTSSQAISSPQ). Positions 802–805 (RKSK) match the Nuclear localization signal 1 (NLS1) motif. Residues S815 and S827 each carry the phosphoserine modification. The Nuclear localization signal 2 (NLS2) motif lies at 832-835 (KRVK). An interaction with TP53 and TP73 region spans residues 839 to 934 (PPRCAMVHSS…PYSDSSSNTS (96 aa)). Positions 873-907 (QTIVIPDTPSPTVSVITISSDTDEEEEQKHAPTST) are interaction with UBE2I. Positions 873–980 (QTIVIPDTPS…PLKTQASEVL (108 aa)) are localization to nuclear speckles. A required for localization to nuclear speckles region spans residues 873–980 (QTIVIPDTPS…PLKTQASEVL (108 aa)). An SUMO interaction motifs (SIM); required for nuclear localization and kinase activity region spans residues 884 to 908 (TVSVITISSDTDEEEEQKHAPTSTV). The segment covering 923–937 (DSPYSDSSSNTSPYS) has biased composition (low complexity). S934 carries the post-translational modification Phosphoserine. The tract at residues 935–1050 (PYSVQQRTGH…LSQAQQHMAA (116 aa)) is interaction with AXIN1. Residues 938-951 (VQQRTGHNGTNTLD) show a composition bias toward polar residues. Residues K953 and K973 each participate in a glycyl lysine isopeptide (Lys-Gly) (interchain with G-Cter in SUMO2) cross-link. Residues 984–1196 (DSLGPAISAS…PAKVNQYPYI (213 aa)) are autoinhibitory domain (AID). Phosphoserine occurs at positions 991, 993, 1042, 1153, and 1186. Positions 991–1046 (SASHHSSSFKSKSSSTVTSTSGHSSGSSSGAIAYRQQRPGPHFQQQQPLNLSQAQQ) are enriched in low complexity. A disordered region spans residues 991 to 1058 (SASHHSSSFK…AADRTGSHRR (68 aa)). K1189 participates in a covalent cross-link: Glycyl lysine isopeptide (Lys-Gly) (interchain with G-Cter in SUMO).

The protein belongs to the protein kinase superfamily. CMGC Ser/Thr protein kinase family. HIPK subfamily. In terms of assembly, interacts with CREB1, SIAH1, WSB1, CBX4, TRADD, p53/TP53, TP73, TP63, CREBBP, DAXX, P53DINP1, SKI, SMAD1, SMAD2 and SMAD3, but not SMAD4. Interacts with SP100; positively regulates TP53-dependent transcription. Interacts with ATF1, PML, RUNX1, EP300, NKX1-2, NKX2-5, UBE2I, HMGA1, CTBP1, AXIN1, NLK, MYB, POU4F1, POU4F2, POU4F3, UBE2I, UBL1 and ZBTB4. Probably part of a complex consisting of p53/TP53, HIPK2 and AXIN1. Interacts with DAZAP2; the interaction results in phosphorylation of DAZAP2 which causes localization of DAZAP2 to the nucleus, reduces interaction of DAZAP2 with HIPK2 and prevents DAZAP2-dependent degradation of HIPK2. Interacts with SIAH1; the interaction is promoted by DAZAP2 and results in SIAH1-mediated ubiquitination and subsequent proteasomal degradation of HIPK2. Interacts with SPN/CD43 cytoplasmic tail. Sumoylated. When conjugated it is directed to nuclear speckles. Desumoylated by SENP1. Sumoylation on Lys-32 is promoted by the E3 SUMO-protein ligase CBX4. Post-translationally, autophosphorylation at Tyr-361 in the activation loop activates the kinase and promotes nuclear localization. In terms of processing, ubiquitinated by FBXO3, WSB1 and SIAH1, leading to rapid proteasome-dependent degradation. The degradation mediated by FBXO3, but not ubiquitination, is prevented in the presence of PML. The degradation mediated by WSB1 and SIAH1 is reversibly reduced upon DNA damage. Cleaved at Asp-923 and Asp-984 by CASP6 in a p53/TP53-dependent manner. The cleaved form lacks the autoinhibitory C-terminal domain (AID), resulting in a hyperactive kinase, which potentiates p53/TP53 Ser-46 phosphorylation and subsequent activation of the cell death machinery. Ubiquitous. Abundant in muscle, heart, small intestine, stomach, kidney and brain; and low in testis, skin and lung.

It is found in the nucleus. The protein resides in the PML body. Its subcellular location is the cytoplasm. The enzyme catalyses L-seryl-[protein] + ATP = O-phospho-L-seryl-[protein] + ADP + H(+). The catalysed reaction is L-threonyl-[protein] + ATP = O-phospho-L-threonyl-[protein] + ADP + H(+). Its function is as follows. Serine/threonine-protein kinase involved in transcription regulation, p53/TP53-mediated cellular apoptosis and regulation of the cell cycle. Acts as a corepressor of several transcription factors, including SMAD1 and POU4F1/Brn3a and probably NK homeodomain transcription factors. Phosphorylates PDX1, ATF1, PML, p53/TP53, CREB1, CTBP1, CBX4, RUNX1, EP300, CTNNB1, HMGA1, ZBTB4 and DAZAP2. Inhibits cell growth and promotes apoptosis through the activation of p53/TP53 both at the transcription level and at the protein level (by phosphorylation and indirect acetylation). The phosphorylation of p53/TP53 may be mediated by a p53/TP53-HIPK2-AXIN1 complex. Involved in the response to hypoxia by acting as a transcriptional co-suppressor of HIF1A. Mediates transcriptional activation of TP73. In response to TGFB, cooperates with DAXX to activate JNK. Negative regulator through phosphorylation and subsequent proteasomal degradation of CTNNB1 and the antiapoptotic factor CTBP1. In the Wnt/beta-catenin signaling pathway acts as an intermediate kinase between MAP3K7/TAK1 and NLK to promote the proteasomal degradation of MYB. Phosphorylates CBX4 upon DNA damage and promotes its E3 SUMO-protein ligase activity. Activates CREB1 and ATF1 transcription factors by phosphorylation in response to genotoxic stress. In response to DNA damage, stabilizes PML by phosphorylation. PML, HIPK2 and FBXO3 may act synergically to activate p53/TP53-dependent transactivation. Promotes angiogenesis, and is involved in erythroid differentiation, especially during fetal liver erythropoiesis. Phosphorylation of RUNX1 and EP300 stimulates EP300 transcription regulation activity. Triggers ZBTB4 protein degradation in response to DNA damage. In response to DNA damage, phosphorylates DAZAP2 which localizes DAZAP2 to the nucleus, reduces interaction of DAZAP2 with HIPK2 and prevents DAZAP2-dependent ubiquitination of HIPK2 by E3 ubiquitin-protein ligase SIAH1 and subsequent proteasomal degradation. Modulates HMGA1 DNA-binding affinity. In response to high glucose, triggers phosphorylation-mediated subnuclear localization shifting of PDX1. Involved in the regulation of eye size, lens formation and retinal lamination during late embryogenesis. The chain is Homeodomain-interacting protein kinase 2 (Hipk2) from Mus musculus (Mouse).